Reading from the N-terminus, the 248-residue chain is PF03932 family protein CutC (248 aa).

Belongs to the CutC family. As to quaternary structure, homodimer.

The protein localises to the cytoplasm. This chain is PF03932 family protein CutC, found in Escherichia coli (strain SMS-3-5 / SECEC).